We begin with the raw amino-acid sequence, 561 residues long: Potassium-transporting ATPase potassium-binding subunit (561 aa).

The next 11 helical transmembrane spans lie at 5–25, 63–83, 103–122, 133–153, 179–199, 255–275, 281–301, 380–400, 418–438, 485–505, and 531–551; these read IELF…GTYM, KYAL…YFIL, LAFN…HYAG, IVIV…AAAI, LLPI…PQTF, IEML…GLMI, ALVL…GAVY, AGLQ…GLMV, LIAL…ALTV, IMTG…MLAV, and AIFI…AVIL.

It belongs to the KdpA family. In terms of assembly, the system is composed of three essential subunits: KdpA, KdpB and KdpC.

The protein localises to the cell membrane. Part of the high-affinity ATP-driven potassium transport (or Kdp) system, which catalyzes the hydrolysis of ATP coupled with the electrogenic transport of potassium into the cytoplasm. This subunit binds the extracellular potassium ions and delivers the ions to the membrane domain of KdpB through an intramembrane tunnel. The chain is Potassium-transporting ATPase potassium-binding subunit from Caldanaerobacter subterraneus subsp. tengcongensis (strain DSM 15242 / JCM 11007 / NBRC 100824 / MB4) (Thermoanaerobacter tengcongensis).